Here is a 357-residue protein sequence, read N- to C-terminus: Hsp70-binding protein 1 (357 aa).

Residues 1–68 are disordered; it reads MADKGSGGSR…DPPPEPMSEE (68 aa). Gly residues predominate over residues 23-35; that stretch reads SSGGSGSSAGGSG. ARM repeat units follow at residues 130 to 172, 175 to 215, 218 to 257, and 260 to 299; these read ENMD…TCSQ, AAIQ…CLVR, EAGL…NLLV, and PEHK…SLVT. Ser349 and Ser354 each carry phosphoserine.

As to quaternary structure, interacts with the ATP-binding domain of HSPA1A. Detected in a ternary complex containing STUB1, HSPA1A and HSPBP1. Interacts with PGLYRP1; this interaction blocks the cytotoxic activity of the PGLYRP1-HSPA1A complex.

In terms of biological role, inhibits HSPA1A chaperone activity by changing the conformation of the ATP-binding domain of HSPA1A and interfering with ATP binding. Interferes with ubiquitination mediated by STUB1 and inhibits chaperone-assisted degradation of target proteins. The polypeptide is Hsp70-binding protein 1 (Hspbp1) (Mus musculus (Mouse)).